Here is a 468-residue protein sequence, read N- to C-terminus: Ribulose bisphosphate carboxylase large chain (468 aa).

K7 carries the N6,N6,N6-trimethyllysine modification. Substrate-binding residues include N116 and T166. Catalysis depends on K168, which acts as the Proton acceptor. K170 lines the substrate pocket. K194, D196, and E197 together coordinate Mg(2+). K194 carries the N6-carboxylysine modification. H287 functions as the Proton acceptor in the catalytic mechanism. Positions 288, 320, and 372 each coordinate substrate.

The protein belongs to the RuBisCO large chain family. Type I subfamily. In terms of assembly, heterohexadecamer of 8 large chains and 8 small chains. The cofactor is Mg(2+).

It is found in the plastid. Its subcellular location is the chloroplast. It carries out the reaction 2 (2R)-3-phosphoglycerate + 2 H(+) = D-ribulose 1,5-bisphosphate + CO2 + H2O. The enzyme catalyses D-ribulose 1,5-bisphosphate + O2 = 2-phosphoglycolate + (2R)-3-phosphoglycerate + 2 H(+). In terms of biological role, ruBisCO catalyzes two reactions: the carboxylation of D-ribulose 1,5-bisphosphate, the primary event in carbon dioxide fixation, as well as the oxidative fragmentation of the pentose substrate in the photorespiration process. Both reactions occur simultaneously and in competition at the same active site. The sequence is that of Ribulose bisphosphate carboxylase large chain from Couroupita guianensis (Cannonball tree).